Reading from the N-terminus, the 220-residue chain is Probable transcriptional regulator NRG2 (220 aa).

C2H2-type zinc fingers lie at residues 153 to 175 (HFCK…NRIH) and 181 to 205 (HICP…YRTH).

It localises to the nucleus. Its function is as follows. Transcriptional repressor. This is Probable transcriptional regulator NRG2 (NRG2) from Saccharomyces cerevisiae (strain ATCC 204508 / S288c) (Baker's yeast).